The chain runs to 801 residues: H(+)/Cl(-) exchange transporter 3 (801 aa).

The Cytoplasmic portion of the chain corresponds to 1–125 (MESEQLFHRG…WEMTKSLYDA (125 aa)). 3 consecutive short sequence motifs (di-leucine internalization motif; mediates targeting to late endosome and lysosome membranes) follow at residues 28–29 (LL), 46–47 (LL), and 71–75 (LLDLL). A helical transmembrane segment spans residues 126–163 (WSGWLVVTLTGLASGALAGLIDIAADWMTDLKEGICLS). N-linked (GlcNAc...) asparagine glycosylation is present at Asn-177. A helical transmembrane segment spans residues 209–232 (MNYIMYIFWALSFAFLAVSLVKVF). Residues 238 to 242 (GSGIP) carry the Selectivity filter part_1 motif. Residue Ser-239 coordinates chloride. Residues 241–248 (IPEIKTIL) constitute an intramembrane region (helical). Transmembrane regions (helical) follow at residues 258–276 (GKWTLMIKTVTLVLAVASG) and 282–301 (EGPLVHVACCCGNIFSYLFP). Positions 280–284 (GKEGP) match the Selectivity filter part_2 motif. 2 intramembrane regions (helical) span residues 313-325 (VLSAASAAGVSVA) and 329-337 (PIGGVLFSL). 3 consecutive transmembrane segments (helical) span residues 349-367 (LWRSFFAALVAAFVLRSIN), 391-416 (FPFILLGVFGGLWGAFFIRANIAWCR), and 423-443 (FGKYPVLEVIIVAAITAVIAF). Residues Asn-451 and Asn-479 are each glycosylated (N-linked (GlcNAc...) asparagine). The helical transmembrane segment at 500–520 (IWQLCLALIFKIIMTVFTFGI) threads the bilayer. The short motif at 525 to 529 (GLFIP) is the Selectivity filter part_3 element. Phe-527 provides a ligand contact to chloride. 2 consecutive intramembrane regions (helical) follow at residues 555–569 (GLYAMVGAAACLGGV) and 573–584 (TVSLVVIVFELT). An intramembrane region (note=Loop between two helices) is located at residues 585–588 (GGLE). Residues 589–607 (YIVPLMAAVMTSKWVGDAF) traverse the membrane as a helical segment. At 608–801 (GREGIYEAHI…NQDPASIMFN (194 aa)) the chain is on the cytoplasmic side. Position 613 (Tyr-613) interacts with chloride. CBS domains follow at residues 641-705 (MRPR…ARKK) and 738-795 (LDMS…NQDP). Residues 672–674 (YNG) and 779–782 (TKKD) contribute to the ATP site.

This sequence belongs to the chloride channel (TC 2.A.49) family. ClC-3/CLCN3 subfamily. In terms of assembly, monomer and homodimer. Forms heterodimers with CLCN4. Post-translationally, N-glycosylated.

The protein resides in the early endosome membrane. The protein localises to the late endosome membrane. It is found in the lysosome membrane. It localises to the cell membrane. Its function is as follows. Strongly outwardly rectifying, electrogenic H(+)/Cl(-)exchanger which mediates the exchange of chloride ions against protons. The CLC channel family contains both chloride channels and proton-coupled anion transporters that exchange chloride or another anion for protons. The presence of conserved gating glutamate residues is typical for family members that function as antiporters. The polypeptide is H(+)/Cl(-) exchange transporter 3 (CLCN3) (Pongo abelii (Sumatran orangutan)).